The chain runs to 203 residues: Dual-action ribosomal maturation protein DarP (203 aa).

The span at 1 to 13 (MQPMTRNSRNSPG) shows a compositional bias: polar residues. Residues 1 to 39 (MQPMTRNSRNSPGSRFPGAFAPEPDMDEPKSKSQKKRDM) are disordered. Over residues 27–39 (DEPKSKSQKKRDM) the composition is skewed to basic and acidic residues.

The protein belongs to the DarP family.

Its subcellular location is the cytoplasm. Its function is as follows. Member of a network of 50S ribosomal subunit biogenesis factors which assembles along the 30S-50S interface, preventing incorrect 23S rRNA structures from forming. Promotes peptidyl transferase center (PTC) maturation. The protein is Dual-action ribosomal maturation protein DarP of Cupriavidus pinatubonensis (strain JMP 134 / LMG 1197) (Cupriavidus necator (strain JMP 134)).